The chain runs to 490 residues: Hexokinase (490 aa).

The region spanning 21–466 (QNLLEHIKHF…SGVGAALIAA (446 aa)) is the Hexokinase domain. The tract at residues 75-209 (DGKETGTFLA…GLPIKVAALI (135 aa)) is hexokinase small subdomain. The interval 210 to 455 (NDTTGTLIAS…DKVTIHAAED (246 aa)) is hexokinase large subdomain.

The protein belongs to the hexokinase family. As to quaternary structure, monomer.

It catalyses the reaction a D-hexose + ATP = a D-hexose 6-phosphate + ADP + H(+). The catalysed reaction is D-fructose + ATP = D-fructose 6-phosphate + ADP + H(+). The enzyme catalyses D-glucose + ATP = D-glucose 6-phosphate + ADP + H(+). Its pathway is carbohydrate metabolism; hexose metabolism. The protein operates within carbohydrate degradation; glycolysis; D-glyceraldehyde 3-phosphate and glycerone phosphate from D-glucose: step 1/4. In terms of biological role, catalyzes the phosphorylation of hexose, such as D-glucose and D-fructose, to hexose 6-phosphate (D-glucose 6-phosphate and D-fructose 6-phosphate, respectively). Mediates the initial step of glycolysis by catalyzing phosphorylation of D-glucose to D-glucose 6-phosphate. The polypeptide is Hexokinase (hxkA) (Emericella nidulans (strain FGSC A4 / ATCC 38163 / CBS 112.46 / NRRL 194 / M139) (Aspergillus nidulans)).